Consider the following 277-residue polypeptide: F-actin-capping protein subunit beta isoforms 1 and 2 (277 aa).

Serine 2 is modified (N-acetylserine).

Belongs to the F-actin-capping protein beta subunit family. As to quaternary structure, component of the F-actin capping complex, composed of a heterodimer of an alpha and a beta subunit. Component of the WASH complex. In terms of assembly, component of the F-actin capping complex, composed of a heterodimer of an alpha and a beta subunit. Subunit of dynactin, a multiprotein complex part of a tripartite complex with dynein and a adapter, such as BICDL1, BICD2 or HOOK3. The dynactin complex is built around ACTR1A/ACTB filament and consists of an actin-related filament composed of a shoulder domain, a pointed end and a barbed end. Its length is defined by its flexible shoulder domain. As to expression, isoform 1 is detected in pectoral muscle, cardiac muscle and gizzard. Isoform 2 is detected in brain and liver (at protein level). Isoform 2 is the predominant isoform of nonmuscle tissues and isoform 1 is the predominant isoform of muscle tissues.

The protein localises to the cytoplasm. It is found in the myofibril. It localises to the sarcomere. Its subcellular location is the z line. The protein resides in the i band. The protein localises to the cytoskeleton. F-actin-capping proteins bind in a Ca(2+)-independent manner to the fast growing ends of actin filaments (barbed end) thereby blocking the exchange of subunits at these ends. Unlike other capping proteins (such as gelsolin and severin), these proteins do not sever actin filaments. May play a role in the regulation of cell morphology and cytoskeletal organization. In terms of biological role, forms, with CAPZB, the barbed end of the fast growing ends of actin filaments in the dynactin complex and stabilizes dynactin structure. The dynactin multiprotein complex activates the molecular motor dynein for ultra-processive transport along microtubules. The sequence is that of F-actin-capping protein subunit beta isoforms 1 and 2 (CAPZB) from Gallus gallus (Chicken).